Consider the following 436-residue polypeptide: 3-ketoacyl-CoA thiolase (436 aa).

Catalysis depends on Cys99, which acts as the Acyl-thioester intermediate. Active-site proton acceptor residues include His392 and Cys422.

Belongs to the thiolase-like superfamily. Thiolase family. As to quaternary structure, heterotetramer of two alpha chains (FadJ) and two beta chains (FadI).

It localises to the cytoplasm. The enzyme catalyses an acyl-CoA + acetyl-CoA = a 3-oxoacyl-CoA + CoA. It functions in the pathway lipid metabolism; fatty acid beta-oxidation. Functionally, catalyzes the final step of fatty acid oxidation in which acetyl-CoA is released and the CoA ester of a fatty acid two carbons shorter is formed. The protein is 3-ketoacyl-CoA thiolase of Shewanella loihica (strain ATCC BAA-1088 / PV-4).